Consider the following 270-residue polypeptide: 4-hydroxy-tetrahydrodipicolinate reductase (270 aa).

Gly7–Met12 is an NAD(+) binding site. Residue Arg34 coordinates NADP(+). Residues Gly97–Thr99 and Ser121–Met124 contribute to the NAD(+) site. His155 serves as the catalytic Proton donor/acceptor. Residue His156 coordinates (S)-2,3,4,5-tetrahydrodipicolinate. The active-site Proton donor is the Lys159. Position 165–166 (Gly165–Thr166) interacts with (S)-2,3,4,5-tetrahydrodipicolinate.

It belongs to the DapB family.

It is found in the cytoplasm. It catalyses the reaction (S)-2,3,4,5-tetrahydrodipicolinate + NAD(+) + H2O = (2S,4S)-4-hydroxy-2,3,4,5-tetrahydrodipicolinate + NADH + H(+). It carries out the reaction (S)-2,3,4,5-tetrahydrodipicolinate + NADP(+) + H2O = (2S,4S)-4-hydroxy-2,3,4,5-tetrahydrodipicolinate + NADPH + H(+). It functions in the pathway amino-acid biosynthesis; L-lysine biosynthesis via DAP pathway; (S)-tetrahydrodipicolinate from L-aspartate: step 4/4. In terms of biological role, catalyzes the conversion of 4-hydroxy-tetrahydrodipicolinate (HTPA) to tetrahydrodipicolinate. In Bartonella quintana (strain Toulouse) (Rochalimaea quintana), this protein is 4-hydroxy-tetrahydrodipicolinate reductase.